Here is a 141-residue protein sequence, read N- to C-terminus: Hemoglobin subunit alpha (141 aa).

Positions Val-1–Arg-141 constitute a Globin domain. Position 3 is a phosphoserine (Ser-3). Position 7 is an N6-succinyllysine (Lys-7). The residue at position 8 (Thr-8) is a Phosphothreonine. Lys-11 carries the post-translational modification N6-succinyllysine. At Lys-16 the chain carries N6-acetyllysine; alternate. Lys-16 bears the N6-succinyllysine; alternate mark. Tyr-24 carries the post-translational modification Phosphotyrosine. The residue at position 35 (Ser-35) is a Phosphoserine. Position 40 is an N6-succinyllysine (Lys-40). Position 49 is a phosphoserine (Ser-49). His-58 provides a ligand contact to O2. His-87 contacts heme b. Phosphoserine is present on Ser-102. Thr-108 is modified (phosphothreonine). Phosphoserine occurs at positions 124 and 131. Residues Thr-134 and Thr-137 each carry the phosphothreonine modification. Residue Ser-138 is modified to Phosphoserine.

This sequence belongs to the globin family. As to quaternary structure, heterotetramer of two alpha chains and two beta chains. As to expression, red blood cells.

In terms of biological role, involved in oxygen transport from the lung to the various peripheral tissues. Its function is as follows. Hemopressin acts as an antagonist peptide of the cannabinoid receptor CNR1. Hemopressin-binding efficiently blocks cannabinoid receptor CNR1 and subsequent signaling. This chain is Hemoglobin subunit alpha (HBA), found in Cebus capucinus (White-faced sapajou).